The primary structure comprises 218 residues: GTP cyclohydrolase 1 (218 aa).

Cys-109, His-112, and Cys-180 together coordinate Zn(2+).

Belongs to the GTP cyclohydrolase I family. Toroid-shaped homodecamer, composed of two pentamers of five dimers.

It carries out the reaction GTP + H2O = 7,8-dihydroneopterin 3'-triphosphate + formate + H(+). Its pathway is cofactor biosynthesis; 7,8-dihydroneopterin triphosphate biosynthesis; 7,8-dihydroneopterin triphosphate from GTP: step 1/1. This chain is GTP cyclohydrolase 1, found in Haemophilus influenzae (strain 86-028NP).